The sequence spans 880 residues: DNA mismatch repair protein MutS (880 aa).

An ATP-binding site is contributed by 625–632; the sequence is GPNMAGKS.

This sequence belongs to the DNA mismatch repair MutS family.

In terms of biological role, this protein is involved in the repair of mismatches in DNA. It is possible that it carries out the mismatch recognition step. This protein has a weak ATPase activity. The polypeptide is DNA mismatch repair protein MutS (Alkaliphilus oremlandii (strain OhILAs) (Clostridium oremlandii (strain OhILAs))).